The following is a 643-amino-acid chain: MNANPKFLSADARVDAAAVAPLPNSRKVYVTGSQPDIRVPMREITQADTPTSFGGEKNPPIYVYDTSGPYTDPDAKIDIRAGLPALRQRWIDARGDTETLAGLTSDYGRERAADPATAELRFPGLHRHPRRAKAGKNVTQMHYARQGIITPEMEYIAIRENQRRAEYLESLKASGPNGAKLAAMMGRQHAGQAFGAAAFGANAPAEITPEFVRDEVARGRAIIPANINHPETEPMIIGRNFLVKINANIGNSAVTSSIGEEVDKMTWAIRWGGDTVMDLSTGKHIHETREWIIRNSPVPIGTVPIYQALEKVNGKAEDLTWEIFRDTLIEQAEQGVDYFTIHAGVRLQYVPLTANRMTGIVSRGGSIMAKWCLAHHKESFLYEHFEEICEIMKAYDVSFSLGDGLRPGSIYDANDEAQLGELKTLGELTQIAWKHDVQVMIEGPGHVPMQLIKENMDLQLDWCKEAPFYTLGPLTTDIAPGYDHITSGIGAAMIGWFGTAMLCYVTPKEHLGLPNKDDVKEGIITYKLAAHAADLAKGHPGAQVRDNALSKARFEFRWQDQFNLGLDPDKAREFHDETLPKDSAKVAHFCSMCGPHFCSMKITQDVREFAAQQGVSENDALKKGMEVKAVEFVKSGSEIYHRQ.

Residues Asn-248, Met-277, Tyr-306, His-342, 362–364 (SRG), 403–406 (DGLR), and Glu-442 contribute to the substrate site. His-446 contributes to the Zn(2+) binding site. Residue Tyr-469 participates in substrate binding. His-510 is a Zn(2+) binding site. 3 residues coordinate [4Fe-4S] cluster: Cys-590, Cys-593, and Cys-598.

The protein belongs to the ThiC family. In terms of assembly, homodimer. Requires [4Fe-4S] cluster as cofactor.

The enzyme catalyses 5-amino-1-(5-phospho-beta-D-ribosyl)imidazole + S-adenosyl-L-methionine = 4-amino-2-methyl-5-(phosphooxymethyl)pyrimidine + CO + 5'-deoxyadenosine + formate + L-methionine + 3 H(+). The protein operates within cofactor biosynthesis; thiamine diphosphate biosynthesis. Functionally, catalyzes the synthesis of the hydroxymethylpyrimidine phosphate (HMP-P) moiety of thiamine from aminoimidazole ribotide (AIR) in a radical S-adenosyl-L-methionine (SAM)-dependent reaction. In Burkholderia pseudomallei (strain 1106a), this protein is Phosphomethylpyrimidine synthase.